The chain runs to 85 residues: U4-theraphotoxin-Hhn1c (85 aa).

A signal peptide spans Met1–Ala22. Residues Glu23–Arg48 constitute a propeptide that is removed on maturation. 3 cysteine pairs are disulfide-bonded: Cys52–Cys66, Cys56–Cys77, and Cys71–Cys82.

This sequence belongs to the neurotoxin 12 (Hwtx-2) family. 02 (Hwtx-2) subfamily. In terms of tissue distribution, expressed by the venom gland.

Its subcellular location is the secreted. Its function is as follows. Postsynaptic neurotoxin. This is U4-theraphotoxin-Hhn1c from Cyriopagopus hainanus (Chinese bird spider).